The sequence spans 985 residues: Pro-apoptotic serine protease NMA111 (985 aa).

The interval 79-269 (VVSIHFSQVA…LPLDRVVRAL (191 aa)) is serine protease. Active-site charge relay system residues include His117, Asp148, and Ser231. PDZ domains follow at residues 287 to 385 (WVLK…TVGD) and 771 to 847 (PEEW…VRDA).

It belongs to the peptidase S1C family.

Its subcellular location is the nucleus. Its function is as follows. Nuclear serine protease which mediates apoptosis. In Kluyveromyces lactis (strain ATCC 8585 / CBS 2359 / DSM 70799 / NBRC 1267 / NRRL Y-1140 / WM37) (Yeast), this protein is Pro-apoptotic serine protease NMA111 (NMA111).